Reading from the N-terminus, the 1388-residue chain is Retrotransposon Gag-like protein 9 (1388 aa).

5 disordered regions span residues alanine 491–serine 511, threonine 769–serine 790, glycine 895–serine 918, threonine 1100–valine 1138, and alanine 1336–lysine 1388. Residues glycine 1103–methionine 1123 show a composition bias toward polar residues. Over residues tyrosine 1359–leucine 1374 the composition is skewed to basic and acidic residues.

The sequence is that of Retrotransposon Gag-like protein 9 from Homo sapiens (Human).